Reading from the N-terminus, the 138-residue chain is NADH-quinone oxidoreductase subunit A (138 aa).

The next 3 helical transmembrane spans lie at 8-28 (FGAVFVFLLLGTVFVVGGYLT), 63-83 (FYVVALIFIIFDVEVVFLFPW), and 93-113 (FALIEALVFAGILIIGLAYAW).

It belongs to the complex I subunit 3 family. In terms of assembly, NDH-1 is composed of 14 different subunits. Subunits NuoA, H, J, K, L, M, N constitute the membrane sector of the complex.

It is found in the cell inner membrane. It carries out the reaction a quinone + NADH + 5 H(+)(in) = a quinol + NAD(+) + 4 H(+)(out). Functionally, NDH-1 shuttles electrons from NADH, via FMN and iron-sulfur (Fe-S) centers, to quinones in the respiratory chain. The immediate electron acceptor for the enzyme in this species is believed to be a menaquinone. Couples the redox reaction to proton translocation (for every two electrons transferred, four hydrogen ions are translocated across the cytoplasmic membrane), and thus conserves the redox energy in a proton gradient. The protein is NADH-quinone oxidoreductase subunit A of Prosthecochloris aestuarii (strain DSM 271 / SK 413).